The sequence spans 366 residues: tRNA/tmRNA (uracil-C(5))-methyltransferase (366 aa).

Residues glutamine 189, tyrosine 217, asparagine 222, glutamate 238, and aspartate 298 each coordinate S-adenosyl-L-methionine. The active-site Nucleophile is cysteine 323. Glutamate 357 serves as the catalytic Proton acceptor.

Belongs to the class I-like SAM-binding methyltransferase superfamily. RNA M5U methyltransferase family. TrmA subfamily.

The enzyme catalyses uridine(54) in tRNA + S-adenosyl-L-methionine = 5-methyluridine(54) in tRNA + S-adenosyl-L-homocysteine + H(+). It catalyses the reaction uridine(341) in tmRNA + S-adenosyl-L-methionine = 5-methyluridine(341) in tmRNA + S-adenosyl-L-homocysteine + H(+). In terms of biological role, dual-specificity methyltransferase that catalyzes the formation of 5-methyluridine at position 54 (m5U54) in all tRNAs, and that of position 341 (m5U341) in tmRNA (transfer-mRNA). This is tRNA/tmRNA (uracil-C(5))-methyltransferase from Photorhabdus laumondii subsp. laumondii (strain DSM 15139 / CIP 105565 / TT01) (Photorhabdus luminescens subsp. laumondii).